A 38-amino-acid polypeptide reads, in one-letter code: Photosystem II reaction center protein L (38 aa).

The helical transmembrane segment at 17–37 (SLYWGLLLIFVLAVPFSNYFF) threads the bilayer.

Belongs to the PsbL family. As to quaternary structure, PSII is composed of 1 copy each of membrane proteins PsbA, PsbB, PsbC, PsbD, PsbE, PsbF, PsbH, PsbI, PsbJ, PsbK, PsbL, PsbM, PsbT, PsbX, PsbY, PsbZ, Psb30/Ycf12, at least 3 peripheral proteins of the oxygen-evolving complex and a large number of cofactors. It forms dimeric complexes.

It localises to the plastid. The protein resides in the chloroplast thylakoid membrane. Functionally, one of the components of the core complex of photosystem II (PSII). PSII is a light-driven water:plastoquinone oxidoreductase that uses light energy to abstract electrons from H(2)O, generating O(2) and a proton gradient subsequently used for ATP formation. It consists of a core antenna complex that captures photons, and an electron transfer chain that converts photonic excitation into a charge separation. This subunit is found at the monomer-monomer interface and is required for correct PSII assembly and/or dimerization. This chain is Photosystem II reaction center protein L, found in Pinus thunbergii (Japanese black pine).